A 176-amino-acid polypeptide reads, in one-letter code: NAD(P)H-quinone oxidoreductase subunit 6, chloroplastic (176 aa).

A run of 5 helical transmembrane segments spans residues 10–30 (ILLVFLGSGLILGGLGVVLFT), 32–52 (PIFSAFSLGLVLVCISLFHIL), 61–81 (AQLLIYVGAVNVLIIFAVMFM), 92–112 (LWTVGDGVTSLVCTSILFSLI), and 152–172 (FYLPFELISIILLVALIGAIA).

The protein belongs to the complex I subunit 6 family. In terms of assembly, NDH is composed of at least 16 different subunits, 5 of which are encoded in the nucleus.

It localises to the plastid. The protein resides in the chloroplast thylakoid membrane. The catalysed reaction is a plastoquinone + NADH + (n+1) H(+)(in) = a plastoquinol + NAD(+) + n H(+)(out). It carries out the reaction a plastoquinone + NADPH + (n+1) H(+)(in) = a plastoquinol + NADP(+) + n H(+)(out). Its function is as follows. NDH shuttles electrons from NAD(P)H:plastoquinone, via FMN and iron-sulfur (Fe-S) centers, to quinones in the photosynthetic chain and possibly in a chloroplast respiratory chain. The immediate electron acceptor for the enzyme in this species is believed to be plastoquinone. Couples the redox reaction to proton translocation, and thus conserves the redox energy in a proton gradient. This chain is NAD(P)H-quinone oxidoreductase subunit 6, chloroplastic (ndhG), found in Drimys granadensis.